The following is a 45-amino-acid chain: Alpha-conotoxin-like Lp1.10 (45 aa).

A propeptide spanning residues 1–27 (VVLGPASDGRNAAANVKAPDLIALTVR) is cleaved from the precursor. 2 cysteine pairs are disulfide-bonded: Cys30/Cys36 and Cys31/Cys44. The segment at 32–34 (HNA) is lacks the Ser-Xaa-Pro motif that is crucial for potent interaction with nAChR. Cys44 bears the Cysteine amide mark.

The protein belongs to the conotoxin A superfamily. In terms of tissue distribution, expressed by the venom duct.

It localises to the secreted. Functionally, alpha-conotoxins act on postsynaptic membranes, they bind to the nicotinic acetylcholine receptors (nAChR) and thus inhibit them. Has possibly a distinct nAChR binding mode from other alpha-conotoxins, due to a different three residue motif (lacks the Ser-Xaa-Pro motif). In Conus leopardus (Leopard cone), this protein is Alpha-conotoxin-like Lp1.10.